Reading from the N-terminus, the 66-residue chain is U1-theraphotoxin-Cg1a 1 (66 aa).

A signal peptide spans 1 to 21; it reads MKTSALFVIFGLVLLFCNSFA. A propeptide spanning residues 22–29 is cleaved from the precursor; it reads AELKTTGR. Disulfide bonds link Cys31–Cys46, Cys38–Cys51, and Cys45–Cys58. Pro63 is modified (proline amide).

This sequence belongs to the neurotoxin 10 (Hwtx-1) family. 46 (Jztx-7/10/12) subfamily. As to expression, expressed by the venom gland.

It is found in the secreted. Functionally, probable ion channel inhibitor. In Chilobrachys guangxiensis (Chinese earth tiger tarantula), this protein is U1-theraphotoxin-Cg1a 1.